A 130-amino-acid polypeptide reads, in one-letter code: Fumarate reductase subunit C (130 aa).

A run of 3 helical transmembrane segments spans residues 30-50 (EGTS…VFAL), 60-80 (FVSF…LFAA), and 110-130 (IKAL…VALL).

Belongs to the FrdC family. Part of an enzyme complex containing four subunits: a flavoprotein (FrdA), an iron-sulfur protein (FrdB), and two hydrophobic anchor proteins (FrdC and FrdD).

The protein localises to the cell inner membrane. Its function is as follows. Two distinct, membrane-bound, FAD-containing enzymes are responsible for the catalysis of fumarate and succinate interconversion; fumarate reductase is used in anaerobic growth, and succinate dehydrogenase is used in aerobic growth. Anchors the catalytic components of the fumarate reductase complex to the cell inner membrane, binds quinones. This chain is Fumarate reductase subunit C, found in Yersinia pseudotuberculosis serotype O:1b (strain IP 31758).